The primary structure comprises 1125 residues: Exportin-6 (1125 aa).

An N-acetylalanine modification is found at Ala2. The Importin N-terminal domain occupies 31–97 (IEELLNNFAQ…RSCLPKLLLA (67 aa)). A Phosphoserine modification is found at Ser199. Phosphothreonine occurs at positions 201 and 204. Ser208 and Ser224 each carry phosphoserine.

This sequence belongs to the exportin family. In terms of assembly, found in a complex with XPO6, Ran, ACTB and PFN1. Interacts with ACTB. Interacts with ACTB in a RanGTP-dependent manner.

Its subcellular location is the nucleus. The protein localises to the cytoplasm. Mediates the nuclear export of actin and profilin-actin complexes in somatic cells. This Mus musculus (Mouse) protein is Exportin-6 (Xpo6).